A 615-amino-acid chain; its full sequence is DNA mismatch repair protein MutL (615 aa).

Residues 362-397 (HFAEPAVREPVAPRYSPAPASGSRPAASWPNAQPGY) form a disordered region. Over residues 373-391 (APRYSPAPASGSRPAASWP) the composition is skewed to low complexity.

This sequence belongs to the DNA mismatch repair MutL/HexB family.

This protein is involved in the repair of mismatches in DNA. It is required for dam-dependent methyl-directed DNA mismatch repair. May act as a 'molecular matchmaker', a protein that promotes the formation of a stable complex between two or more DNA-binding proteins in an ATP-dependent manner without itself being part of a final effector complex. This chain is DNA mismatch repair protein MutL, found in Escherichia coli O6:H1 (strain CFT073 / ATCC 700928 / UPEC).